We begin with the raw amino-acid sequence, 102 residues long: Small ribosomal subunit protein uS10 (102 aa).

Belongs to the universal ribosomal protein uS10 family. In terms of assembly, part of the 30S ribosomal subunit.

Its function is as follows. Involved in the binding of tRNA to the ribosomes. This chain is Small ribosomal subunit protein uS10, found in Lactobacillus helveticus (strain DPC 4571).